The primary structure comprises 338 residues: L-lysine 2,3-aminomutase (338 aa).

Residues 107–330 (HKYRNRLLFM…PKLAREIAGE (224 aa)) enclose the Radical SAM core domain. [4Fe-4S] cluster contacts are provided by cysteine 121, cysteine 125, and cysteine 128. Lysine 333 is subject to N6-(pyridoxal phosphate)lysine.

This sequence belongs to the radical SAM superfamily. KamA family. The cofactor is [4Fe-4S] cluster. Requires pyridoxal 5'-phosphate as cofactor.

The catalysed reaction is L-lysine = D-beta-lysine. With EpmA is involved in the beta-lysylation step of the post-translational modification of translation elongation factor P (EF-P) on 'Lys-34'. EpmB appears to act before EpmA. Displays lysine 2,3-aminomutase activity, producing (R)-beta-lysine from (S)-alpha-lysine (L-lysine). This is L-lysine 2,3-aminomutase (epmB) from Haemophilus influenzae (strain ATCC 51907 / DSM 11121 / KW20 / Rd).